Reading from the N-terminus, the 130-residue chain is Small ribosomal subunit protein uS9 (130 aa).

It belongs to the universal ribosomal protein uS9 family.

The chain is Small ribosomal subunit protein uS9 from Acidovorax ebreus (strain TPSY) (Diaphorobacter sp. (strain TPSY)).